Consider the following 93-residue polypeptide: Small ribosomal subunit protein uS19 (93 aa).

Positions 73-93 (EFSPTRTYRGHNKKDKKIQKK) are disordered. Positions 80–93 (YRGHNKKDKKIQKK) are enriched in basic residues.

It belongs to the universal ribosomal protein uS19 family.

Its function is as follows. Protein S19 forms a complex with S13 that binds strongly to the 16S ribosomal RNA. This chain is Small ribosomal subunit protein uS19 (rpsS), found in Aster yellows phytoplasma.